Reading from the N-terminus, the 44-residue chain is Large ribosomal subunit protein bL34 (44 aa).

It belongs to the bacterial ribosomal protein bL34 family.

In Buchnera aphidicola subsp. Cinara cedri (strain Cc), this protein is Large ribosomal subunit protein bL34.